A 364-amino-acid chain; its full sequence is Ribosomal RNA large subunit methyltransferase F (364 aa).

The interval 1–52 (MPKPAIKTAAKLAMSSAGKRGKPSTPKSLAKPQTTKPKTASKLKAKHGEQKR) is disordered. A compositionally biased stretch (polar residues) spans 25–38 (TPKSLAKPQTTKPK).

It belongs to the methyltransferase superfamily. METTL16/RlmF family.

Its subcellular location is the cytoplasm. It catalyses the reaction adenosine(1618) in 23S rRNA + S-adenosyl-L-methionine = N(6)-methyladenosine(1618) in 23S rRNA + S-adenosyl-L-homocysteine + H(+). Functionally, specifically methylates the adenine in position 1618 of 23S rRNA. The chain is Ribosomal RNA large subunit methyltransferase F from Shewanella sp. (strain ANA-3).